Consider the following 154-residue polypeptide: Fluoride-specific ion channel FluC 1 (154 aa).

4 helical membrane-spanning segments follow: residues 28-48, 59-79, 91-111, and 124-144; these read VVAV…AASL, WTTF…MVVI, PFFG…AVDS, and LAYL…AAWA. The Na(+) site is built by glycine 99 and threonine 102.

This sequence belongs to the fluoride channel Fluc/FEX (TC 1.A.43) family.

It is found in the cell membrane. The enzyme catalyses fluoride(in) = fluoride(out). Its activity is regulated as follows. Na(+) is not transported, but it plays an essential structural role and its presence is essential for fluoride channel function. Its function is as follows. Fluoride-specific ion channel. Important for reducing fluoride concentration in the cell, thus reducing its toxicity. The polypeptide is Fluoride-specific ion channel FluC 1 (Streptomyces coelicolor (strain ATCC BAA-471 / A3(2) / M145)).